Here is a 578-residue protein sequence, read N- to C-terminus: Interleukin-10 receptor subunit alpha (578 aa).

The signal sequence occupies residues 1–21 (MLPCLVVLLAALLSLRLGSDA). The Extracellular segment spans residues 22–235 (HGTELPSPPS…LTRQYFTVTN (214 aa)). N-linked (GlcNAc...) asparagine glycans are attached at residues Asn-50, Asn-74, Asn-110, Asn-154, Asn-177, and Asn-189. Residues Cys-56 and Cys-75 are joined by a disulfide bond. Cys-202 and Cys-223 form a disulfide bridge. The helical transmembrane segment at 236-256 (VIIFFAFVLLLSGALAYCLAL) threads the bilayer. Residues 257-578 (QLYVRRRKKL…PLISSLQSSE (322 aa)) lie on the Cytoplasmic side of the membrane. A disordered region spans residues 313-436 (LHGSTDSGFG…PPEPEVPGEE (124 aa)). Positions 316–332 (STDSGFGSTKPSLQTEE) are enriched in polar residues. The BTRC recognition motif motif lies at 318 to 323 (DSGFGS). The span at 357–371 (GDSCSSGSSNSTDSG) shows a compositional bias: low complexity. Residues 377–396 (PSLSPSTGPTWEQQVGSNSR) are compositionally biased toward polar residues.

This sequence belongs to the type II cytokine receptor family. In terms of assembly, interacts with IL10. Interacts with IL10RB. Interacts (via its cytoplasmic domain) with JAK1 (via N-terminus). Interacts with BTRC; this interaction leads to IL10RA ubiquitination and subsequent degradation. Interacts with STAT3. (Microbial infection) Interacts with human cytomegalovirus protein IL10. As to quaternary structure, (Microbial infection) Interacts with Epstein-Barr virus protein IL10. Post-translationally, phosphorylated. Phosphorylation of the cytoplasmic tail induced STAT3 activation. Ubiquitinated by BTRC; ubiquitination leads to endocytosis and subsequent degradation of IL10RA. In terms of tissue distribution, primarily expressed in hematopoetic cells including B-cells, T-cells, NK cells, monocytes and macrophages. Not expressed in non-hematopoetic cells such as fibroblasts or endothelial cells.

The protein localises to the cell membrane. The protein resides in the cytoplasm. Functionally, cell surface receptor for the cytokine IL10 that participates in IL10-mediated anti-inflammatory functions, limiting excessive tissue disruption caused by inflammation. Upon binding to IL10, induces a conformational change in IL10RB, allowing IL10RB to bind IL10 as well. In turn, the heterotetrameric assembly complex, composed of two subunits of IL10RA and IL10RB, activates the kinases JAK1 and TYK2 that are constitutively associated with IL10RA and IL10RB respectively. These kinases then phosphorylate specific tyrosine residues in the intracellular domain in IL10RA leading to the recruitment and subsequent phosphorylation of STAT3. Once phosphorylated, STAT3 homodimerizes, translocates to the nucleus and activates the expression of anti-inflammatory genes. In addition, IL10RA-mediated activation of STAT3 inhibits starvation-induced autophagy. In Homo sapiens (Human), this protein is Interleukin-10 receptor subunit alpha (IL10RA).